A 120-amino-acid polypeptide reads, in one-letter code: Large ribosomal subunit protein bL12 (120 aa).

It belongs to the bacterial ribosomal protein bL12 family. In terms of assembly, homodimer. Part of the ribosomal stalk of the 50S ribosomal subunit. Forms a multimeric L10(L12)X complex, where L10 forms an elongated spine to which 2 to 4 L12 dimers bind in a sequential fashion. Binds GTP-bound translation factors.

In terms of biological role, forms part of the ribosomal stalk which helps the ribosome interact with GTP-bound translation factors. Is thus essential for accurate translation. This is Large ribosomal subunit protein bL12 from Lactobacillus gasseri (strain ATCC 33323 / DSM 20243 / BCRC 14619 / CIP 102991 / JCM 1131 / KCTC 3163 / NCIMB 11718 / NCTC 13722 / AM63).